A 351-amino-acid chain; its full sequence is UDP-3-O-acylglucosamine N-acyltransferase (351 aa).

Residue His240 is the Proton acceptor of the active site.

This sequence belongs to the transferase hexapeptide repeat family. LpxD subfamily. As to quaternary structure, homotrimer.

It catalyses the reaction a UDP-3-O-[(3R)-3-hydroxyacyl]-alpha-D-glucosamine + a (3R)-hydroxyacyl-[ACP] = a UDP-2-N,3-O-bis[(3R)-3-hydroxyacyl]-alpha-D-glucosamine + holo-[ACP] + H(+). It participates in bacterial outer membrane biogenesis; LPS lipid A biosynthesis. Functionally, catalyzes the N-acylation of UDP-3-O-acylglucosamine using 3-hydroxyacyl-ACP as the acyl donor. Is involved in the biosynthesis of lipid A, a phosphorylated glycolipid that anchors the lipopolysaccharide to the outer membrane of the cell. The sequence is that of UDP-3-O-acylglucosamine N-acyltransferase from Pseudomonas savastanoi pv. phaseolicola (strain 1448A / Race 6) (Pseudomonas syringae pv. phaseolicola (strain 1448A / Race 6)).